A 148-amino-acid chain; its full sequence is Large ribosomal subunit protein bL9 (148 aa).

It belongs to the bacterial ribosomal protein bL9 family.

Binds to the 23S rRNA. The sequence is that of Large ribosomal subunit protein bL9 from Ectopseudomonas mendocina (strain ymp) (Pseudomonas mendocina).